The primary structure comprises 317 residues: tRNA dimethylallyltransferase (317 aa).

16 to 23 (GPTASGKS) is a binding site for ATP. 18–23 (TASGKS) provides a ligand contact to substrate. 3 interaction with substrate tRNA regions span residues 41–44 (DSAQ), 165–169 (QRIQR), and 247–252 (RCVGYR).

Belongs to the IPP transferase family. As to quaternary structure, monomer. The cofactor is Mg(2+).

The catalysed reaction is adenosine(37) in tRNA + dimethylallyl diphosphate = N(6)-dimethylallyladenosine(37) in tRNA + diphosphate. Functionally, catalyzes the transfer of a dimethylallyl group onto the adenine at position 37 in tRNAs that read codons beginning with uridine, leading to the formation of N6-(dimethylallyl)adenosine (i(6)A). The chain is tRNA dimethylallyltransferase from Nitrosomonas europaea (strain ATCC 19718 / CIP 103999 / KCTC 2705 / NBRC 14298).